Reading from the N-terminus, the 189-residue chain is Probable nicotinate-nucleotide adenylyltransferase (189 aa).

This sequence belongs to the NadD family.

The catalysed reaction is nicotinate beta-D-ribonucleotide + ATP + H(+) = deamido-NAD(+) + diphosphate. Its pathway is cofactor biosynthesis; NAD(+) biosynthesis; deamido-NAD(+) from nicotinate D-ribonucleotide: step 1/1. Functionally, catalyzes the reversible adenylation of nicotinate mononucleotide (NaMN) to nicotinic acid adenine dinucleotide (NaAD). This chain is Probable nicotinate-nucleotide adenylyltransferase, found in Bacillus pumilus (strain SAFR-032).